The following is a 736-amino-acid chain: Polyphosphate kinase (736 aa).

Asn91 is an ATP binding site. 2 residues coordinate Mg(2+): Arg421 and Arg451. Catalysis depends on His481, which acts as the Phosphohistidine intermediate. Residues Tyr514, Arg610, and His638 each contribute to the ATP site.

It belongs to the polyphosphate kinase 1 (PPK1) family. The cofactor is Mg(2+). An intermediate of this reaction is the autophosphorylated ppk in which a phosphate is covalently linked to a histidine residue through a N-P bond.

The catalysed reaction is [phosphate](n) + ATP = [phosphate](n+1) + ADP. Its function is as follows. Catalyzes the reversible transfer of the terminal phosphate of ATP to form a long-chain polyphosphate (polyP). The sequence is that of Polyphosphate kinase from Pseudomonas syringae pv. tomato (strain ATCC BAA-871 / DC3000).